The following is a 300-amino-acid chain: GTPase Era (300 aa).

Positions 8–176 (RCGYVAIVGR…ESLIASHLPE (169 aa)) constitute an Era-type G domain. The G1 stretch occupies residues 16-23 (GRPNVGKS). A GTP-binding site is contributed by 16-23 (GRPNVGKS). The tract at residues 42-46 (QTTRH) is G2. The segment at 63-66 (DTPG) is G3. GTP contacts are provided by residues 63 to 67 (DTPGM) and 125 to 128 (NKTD). Positions 125 to 128 (NKTD) are G4. The G5 stretch occupies residues 155-157 (ISA). Positions 199-283 (VREKIMRQLG…MLNLWVKVKG (85 aa)) constitute a KH type-2 domain.

This sequence belongs to the TRAFAC class TrmE-Era-EngA-EngB-Septin-like GTPase superfamily. Era GTPase family. Monomer.

It is found in the cytoplasm. Its subcellular location is the cell inner membrane. An essential GTPase that binds both GDP and GTP, with rapid nucleotide exchange. Plays a role in 16S rRNA processing and 30S ribosomal subunit biogenesis and possibly also in cell cycle regulation and energy metabolism. This is GTPase Era from Pseudomonas syringae pv. tomato (strain ATCC BAA-871 / DC3000).